The following is a 28-amino-acid chain: Chassatide C11 (28 aa).

3 disulfide bridges follow: Cys3/Cys19, Cys7/Cys21, and Cys12/Cys26. Methionine sulfoxide; in form chassatide chaC11A is present on Met16.

Belongs to the cyclotide family. Bracelet subfamily. Expressed in fruit, pedicel and stem but not in leaf and root (at protein level).

Chassatide C11: Probably participates in a plant defense mechanism. Active against E.coli ATCC 25922 (MIC=8.5 uM) but not against S.aureus ATCC 12600 or S.epidermidis ATCC 14990. Has cytotoxic and hemolytic activity. In terms of biological role, chassatide C11A: Probably participates in a plant defense mechanism. Has no activity against bacteria up to a concentration of 80 uM. Has no cytotoxic and no hemolytic activity. This Chassalia chartacea (Chassalia curviflora) protein is Chassatide C11.